The primary structure comprises 261 residues: Triosephosphate isomerase (261 aa).

10-12 is a substrate binding site; that stretch reads NWK. The active-site Electrophile is the His-100. The active-site Proton acceptor is the Glu-172. Substrate-binding positions include Gly-178, Ser-218, and 239-240; that span reads GG.

This sequence belongs to the triosephosphate isomerase family. In terms of assembly, homodimer.

The protein resides in the cytoplasm. It carries out the reaction D-glyceraldehyde 3-phosphate = dihydroxyacetone phosphate. It participates in carbohydrate biosynthesis; gluconeogenesis. It functions in the pathway carbohydrate degradation; glycolysis; D-glyceraldehyde 3-phosphate from glycerone phosphate: step 1/1. Its function is as follows. Involved in the gluconeogenesis. Catalyzes stereospecifically the conversion of dihydroxyacetone phosphate (DHAP) to D-glyceraldehyde-3-phosphate (G3P). The chain is Triosephosphate isomerase from Mycobacterium leprae (strain TN).